The primary structure comprises 350 residues: Biotin synthase (350 aa).

The Radical SAM core domain maps to 38 to 256 (NHVQVSTLLS…IAVARIMMPE (219 aa)). Positions 53, 57, and 60 each coordinate [4Fe-4S] cluster. Residues cysteine 97, cysteine 128, cysteine 188, and arginine 260 each coordinate [2Fe-2S] cluster.

Belongs to the radical SAM superfamily. Biotin synthase family. Homodimer. [4Fe-4S] cluster is required as a cofactor. It depends on [2Fe-2S] cluster as a cofactor.

It carries out the reaction (4R,5S)-dethiobiotin + (sulfur carrier)-SH + 2 reduced [2Fe-2S]-[ferredoxin] + 2 S-adenosyl-L-methionine = (sulfur carrier)-H + biotin + 2 5'-deoxyadenosine + 2 L-methionine + 2 oxidized [2Fe-2S]-[ferredoxin]. Its pathway is cofactor biosynthesis; biotin biosynthesis; biotin from 7,8-diaminononanoate: step 2/2. Functionally, catalyzes the conversion of dethiobiotin (DTB) to biotin by the insertion of a sulfur atom into dethiobiotin via a radical-based mechanism. The protein is Biotin synthase of Aliivibrio fischeri (strain ATCC 700601 / ES114) (Vibrio fischeri).